The chain runs to 364 residues: Alanine racemase (364 aa).

Catalysis depends on lysine 35, which acts as the Proton acceptor; specific for D-alanine. Lysine 35 carries the N6-(pyridoxal phosphate)lysine modification. Arginine 131 provides a ligand contact to substrate. The Proton acceptor; specific for L-alanine role is filled by tyrosine 256. Substrate is bound at residue methionine 304.

Belongs to the alanine racemase family. Requires pyridoxal 5'-phosphate as cofactor.

It carries out the reaction L-alanine = D-alanine. It participates in amino-acid biosynthesis; D-alanine biosynthesis; D-alanine from L-alanine: step 1/1. In terms of biological role, catalyzes the interconversion of L-alanine and D-alanine. May also act on other amino acids. The polypeptide is Alanine racemase (alr) (Halorhodospira halophila (strain DSM 244 / SL1) (Ectothiorhodospira halophila (strain DSM 244 / SL1))).